The primary structure comprises 264 residues: 3-methyl-2-oxobutanoate hydroxymethyltransferase (264 aa).

2 residues coordinate Mg(2+): aspartate 42 and aspartate 81. Residues 42–43, aspartate 81, and lysine 110 contribute to the 3-methyl-2-oxobutanoate site; that span reads DS. Glutamate 112 contacts Mg(2+). The Proton acceptor role is filled by glutamate 179.

Belongs to the PanB family. As to quaternary structure, homodecamer; pentamer of dimers. Requires Mg(2+) as cofactor.

Its subcellular location is the cytoplasm. The catalysed reaction is 3-methyl-2-oxobutanoate + (6R)-5,10-methylene-5,6,7,8-tetrahydrofolate + H2O = 2-dehydropantoate + (6S)-5,6,7,8-tetrahydrofolate. It participates in cofactor biosynthesis; (R)-pantothenate biosynthesis; (R)-pantoate from 3-methyl-2-oxobutanoate: step 1/2. Functionally, catalyzes the reversible reaction in which hydroxymethyl group from 5,10-methylenetetrahydrofolate is transferred onto alpha-ketoisovalerate to form ketopantoate. This chain is 3-methyl-2-oxobutanoate hydroxymethyltransferase, found in Francisella tularensis subsp. tularensis (strain FSC 198).